Reading from the N-terminus, the 209-residue chain is MDVILLERIEKLGHIGDVVAVKNGYARNFLLPRKKALRANEANRKIFEANRAQIEADNAARRTDAEKESEVVNGLTVTLIRQASNTGHLYGSVSARDLADAIVEAKPEAKVAKNQIVLDRPIKSIGISEVRVVLHPEVAVKIKVNVARSPEEAELQAEGVDVMNQMFERDGASFTEDYDPNAEPGLATEAEEAVADADDNAETNSEESL.

Residues 169-209 form a disordered region; that stretch reads RDGASFTEDYDPNAEPGLATEAEEAVADADDNAETNSEESL. The span at 189 to 209 shows a compositional bias: acidic residues; that stretch reads EAEEAVADADDNAETNSEESL.

It belongs to the bacterial ribosomal protein bL9 family.

Functionally, binds to the 23S rRNA. This is Large ribosomal subunit protein bL9 from Zymomonas mobilis subsp. mobilis (strain ATCC 31821 / ZM4 / CP4).